Here is a 259-residue protein sequence, read N- to C-terminus: Dysbindin domain-containing protein 2 (259 aa).

2 disordered regions span residues serine 27–arginine 56 and alanine 174–serine 259. Pro residues predominate over residues serine 32–proline 46. Positions threonine 205–threonine 223 are enriched in low complexity. Phosphoserine occurs at positions 217 and 218. The residue at position 237 (threonine 237) is a Phosphothreonine. Serine 242 carries the phosphoserine modification.

This sequence belongs to the dysbindin family. In terms of assembly, monomer. Interacts with CSNK1D and CSNK1E. Detected in brain.

In terms of biological role, may modulate the activity of casein kinase-1. Inhibits CSNK1D autophosphorylation (in vitro). This is Dysbindin domain-containing protein 2 (DBNDD2) from Homo sapiens (Human).